A 209-amino-acid polypeptide reads, in one-letter code: PRA1 family protein A3 (209 aa).

4 helical membrane-spanning segments follow: residues 51-72 (LYYYRTNYFILFVFVLGLALIT), 76-98 (AILGAALTALSLAFLNDSFAATF), 143-163 (LVFVLLGLTASFVLWFTSCGL), and 164-184 (LWVLYALTTALLMILLHASLR).

The protein belongs to the PRA1 family.

It is found in the endosome membrane. Its function is as follows. May be involved in both secretory and endocytic intracellular trafficking in the endosomal/prevacuolar compartments. The chain is PRA1 family protein A3 (PRA1A3) from Arabidopsis thaliana (Mouse-ear cress).